Reading from the N-terminus, the 115-residue chain is C-C motif chemokine 6 (115 aa).

An N-terminal signal peptide occupies residues 1–21 (MRHSKTAISFFILVAVLGSQA). Cystine bridges form between Cys49–Cys72, Cys50–Cys88, and Cys59–Cys99.

Belongs to the intercrine beta (chemokine CC) family.

It is found in the secreted. The polypeptide is C-C motif chemokine 6 (Ccl6) (Rattus norvegicus (Rat)).